The chain runs to 291 residues: Isopentenyl-diphosphate Delta-isomerase I, chloroplastic (291 aa).

The N-terminal 52 residues, 1–52, are a transit peptide targeting the chloroplast; that stretch reads MSTASLFSFPSFHLRSLLPSLSSSSSSSSSRFAPPRLSPIRSPAPRTQLSVR. S2 carries the post-translational modification N-acetylthreonine. Over residues 20 to 39 the composition is skewed to low complexity; the sequence is SLSSSSSSSSSRFAPPRLSP. The segment at 20-43 is disordered; the sequence is SLSSSSSSSSSRFAPPRLSPIRSP. A substrate-binding site is contributed by K95. Residues H99 and H111 each contribute to the Mg(2+) site. The Nudix hydrolase domain occupies 109 to 261; it reads LLHRAFSVFL…AVKLSPWFRL (153 aa). R130 and K134 together coordinate substrate. C146 is an active-site residue. Residue S147 coordinates substrate. The Nudix box motif lies at 147–177; that stretch reads SHPLYRESELIEENVLGVRNAAQRKLFDELG. Mg(2+) is bound by residues E206 and E208. E208 is an active-site residue.

It belongs to the IPP isomerase type 1 family. The cofactor is Mg(2+).

It localises to the plastid. The protein resides in the chloroplast. The protein localises to the cytoplasm. The enzyme catalyses isopentenyl diphosphate = dimethylallyl diphosphate. The protein operates within isoprenoid biosynthesis; dimethylallyl diphosphate biosynthesis; dimethylallyl diphosphate from isopentenyl diphosphate: step 1/1. It participates in porphyrin-containing compound metabolism; chlorophyll biosynthesis. Functionally, catalyzes the 1,3-allylic rearrangement of the homoallylic substrate isopentenyl (IPP) to its highly electrophilic allylic isomer, dimethylallyl diphosphate (DMAPP). The chain is Isopentenyl-diphosphate Delta-isomerase I, chloroplastic (IPP1) from Arabidopsis thaliana (Mouse-ear cress).